Reading from the N-terminus, the 201-residue chain is 3-isopropylmalate dehydratase small subunit (201 aa).

Belongs to the LeuD family. LeuD type 1 subfamily. As to quaternary structure, heterodimer of LeuC and LeuD.

The enzyme catalyses (2R,3S)-3-isopropylmalate = (2S)-2-isopropylmalate. Its pathway is amino-acid biosynthesis; L-leucine biosynthesis; L-leucine from 3-methyl-2-oxobutanoate: step 2/4. Functionally, catalyzes the isomerization between 2-isopropylmalate and 3-isopropylmalate, via the formation of 2-isopropylmaleate. This is 3-isopropylmalate dehydratase small subunit from Erwinia tasmaniensis (strain DSM 17950 / CFBP 7177 / CIP 109463 / NCPPB 4357 / Et1/99).